The primary structure comprises 312 residues: Non-structural protein 12A (312 aa).

Low complexity predominate over residues 1–23 (MFKSGSGSLKRSGSISSVKSFSG). 3 disordered regions span residues 1–37 (MFKSGSGSLKRSGSISSVKSFSGDSEKGLPPISRGSV), 62–97 (FVPEKTKSEGNLKNKSSVITGNFGSSGPTNAHYNQN), and 112–159 (SSKG…SHGT). Residues 63–73 (VPEKTKSEGNL) show a composition bias toward basic and acidic residues. The segment covering 74–97 (KNKSSVITGNFGSSGPTNAHYNQN) has biased composition (polar residues). Basic and acidic residues predominate over residues 122-134 (DARHTATDSRLSQ). Residues 135–154 (EVKQPFSEENASGNDLNTGR) show a composition bias toward polar residues.

It belongs to the phytoreovirus non-structural protein Pns12A family.

It is found in the host cytoplasm. Constituent of viral factories. The sequence is that of Non-structural protein 12A from Rice dwarf virus (isolate O) (RDV).